The primary structure comprises 359 residues: tRNA-specific 2-thiouridylase MnmA (359 aa).

ATP is bound by residues 6 to 13 (AMSGGVDS) and leucine 32. The active-site Nucleophile is cysteine 97. A disulfide bond links cysteine 97 and cysteine 195. Glycine 121 provides a ligand contact to ATP. An interaction with tRNA region spans residues 144–146 (KDQ). Cysteine 195 acts as the Cysteine persulfide intermediate in catalysis.

This sequence belongs to the MnmA/TRMU family.

It localises to the cytoplasm. It carries out the reaction S-sulfanyl-L-cysteinyl-[protein] + uridine(34) in tRNA + AH2 + ATP = 2-thiouridine(34) in tRNA + L-cysteinyl-[protein] + A + AMP + diphosphate + H(+). In terms of biological role, catalyzes the 2-thiolation of uridine at the wobble position (U34) of tRNA, leading to the formation of s(2)U34. This Tropheryma whipplei (strain Twist) (Whipple's bacillus) protein is tRNA-specific 2-thiouridylase MnmA.